The sequence spans 204 residues: MANPIKIGIGGPVGAGKTQLIEKVVKRLSKEMSIGVITNDIYTKEDEKILVNSGVLPESRIIGVETGGCPHTAIREDASMNFAAIDELLERHDDIELIFIESGGDNLAATFSPELVDFSIYIIDVAQGEKIPRKGGQGMIKSDFFVINKTDLAPYVGASLEQMAEDTKVFRDKRPFTFTNLKTDEGLDEVIDWIKRDTLLKGLS.

11 to 18 (GPVGAGKT) serves as a coordination point for GTP.

It belongs to the SIMIBI class G3E GTPase family. UreG subfamily. In terms of assembly, homodimer. UreD, UreF and UreG form a complex that acts as a GTP-hydrolysis-dependent molecular chaperone, activating the urease apoprotein by helping to assemble the nickel containing metallocenter of UreC. The UreE protein probably delivers the nickel.

Its subcellular location is the cytoplasm. In terms of biological role, facilitates the functional incorporation of the urease nickel metallocenter. This process requires GTP hydrolysis, probably effectuated by UreG. This chain is Urease accessory protein UreG, found in Staphylococcus aureus (strain bovine RF122 / ET3-1).